Reading from the N-terminus, the 496-residue chain is GTPase Der (496 aa).

EngA-type G domains are found at residues 3-166 (PVVA…FDNL) and 208-381 (IKLA…RSAT). Residues 9–16 (GRPNVGKS), 56–60 (DTGGI), 118–121 (NKVD), 214–221 (GRPNVGKS), 261–265 (DTAGV), and 326–329 (NKWD) contribute to the GTP site. One can recognise a KH-like domain in the interval 382 to 466 (TRVGTSVLTR…PIRIQFQNSD (85 aa)).

This sequence belongs to the TRAFAC class TrmE-Era-EngA-EngB-Septin-like GTPase superfamily. EngA (Der) GTPase family. Associates with the 50S ribosomal subunit.

Functionally, GTPase that plays an essential role in the late steps of ribosome biogenesis. This Vibrio vulnificus (strain CMCP6) protein is GTPase Der.